The sequence spans 480 residues: MARLPGHPEVPGAEPGSAVRGGRGGRGARARHVIINVGGCRVRLAWAALARCPLARLERLRACRGHDELLRVCDDYDVSRDEFFFDRSPCAFRAIVALLRAGKLRLLRGPCALAFRDELAYWGIDEARLERCCLRRLRRREEEAAEARATPPARGPQTSPGRALGSGRLERGRRRLRDVVENPHSGLAGKLFAYVSVAFVAVTAVGLCLSTMPDVRAEEERGECSTKCRNLFVLETVCVAWFSFEFLLRSLQAESKCAFLRTPLAIIDILAILPFYVSLLAGLAAGPTGSKMLERAGLVLRLLRALRVLYVMRLARHSLGLRSLGLTVRRCAREFGLLLLFLCVAMALFAPLVHLAERELGAHRDFSSVPASYWWAVISMTTVGYGDMVPRSLPGQVVALSSILSGILLMAFPVTSIFHTFSRSYSELKEQQQRAASPEPVLREDSTRDDSTRSASATEDSSQDPETAGAAGSLPGPVGP.

2 disordered regions span residues 1 to 25 (MARL…GRGG) and 144 to 167 (AAEA…LGSG). Residues 1 to 187 (MARLPGHPEV…DVVENPHSGL (187 aa)) are Cytoplasmic-facing. A helical transmembrane segment spans residues 188–209 (AGKLFAYVSVAFVAVTAVGLCL). Topologically, residues 210–230 (STMPDVRAEEERGECSTKCRN) are extracellular. A helical transmembrane segment spans residues 231-252 (LFVLETVCVAWFSFEFLLRSLQ). Residues 253 to 263 (AESKCAFLRTP) lie on the Cytoplasmic side of the membrane. The helical transmembrane segment at 264–284 (LAIIDILAILPFYVSLLAGLA) threads the bilayer. The Extracellular portion of the chain corresponds to 285–296 (AGPTGSKMLERA). The chain crosses the membrane as a helical; Voltage-sensor span at residues 297–317 (GLVLRLLRALRVLYVMRLARH). At 318–332 (SLGLRSLGLTVRRCA) the chain is on the cytoplasmic side. A helical transmembrane segment spans residues 333–354 (REFGLLLLFLCVAMALFAPLVH). At 355 to 369 (LAERELGAHRDFSSV) the chain is on the extracellular side. Residues 370–381 (PASYWWAVISMT) constitute an intramembrane region (helical). Positions 382-387 (TVGYGD) match the Selectivity filter motif. The stretch at 382–389 (TVGYGDMV) is an intramembrane region. Residues 390–396 (PRSLPGQ) lie on the Extracellular side of the membrane. A helical membrane pass occupies residues 397-425 (VVALSSILSGILLMAFPVTSIFHTFSRSY). At 426 to 480 (SELKEQQQRAASPEPVLREDSTRDDSTRSASATEDSSQDPETAGAAGSLPGPVGP) the chain is on the cytoplasmic side. A disordered region spans residues 429–480 (KEQQQRAASPEPVLREDSTRDDSTRSASATEDSSQDPETAGAAGSLPGPVGP). A compositionally biased stretch (basic and acidic residues) spans 441 to 452 (VLREDSTRDDST).

This sequence belongs to the potassium channel family. G (TC 1.A.1.2) subfamily. Kv6.2/KCNG2 sub-subfamily. As to quaternary structure, heterodimer with KCNB1. As to expression, highly expressed in heart, in particular in right and left atrium, and detected at lower levels in the right and left ventricle.

The protein localises to the cell membrane. Regulatory alpha-subunit of the voltage-gated potassium (Kv) channel which, when coassembled with KCNB1, can modulate the kinetics and conductance-voltage relationship. Modulates channel activity by shifting the threshold and the half-maximal activation to more negative values. Potassium channel subunit that does not form functional channels by itself. This chain is Voltage-gated potassium channel regulatory subunit KCNG2, found in Rattus norvegicus (Rat).